A 357-amino-acid polypeptide reads, in one-letter code: tRNA N6-adenosine threonylcarbamoyltransferase (357 aa).

Residues H120 and H124 each contribute to the Fe cation site. Substrate-binding positions include 143 to 147 (LVSGG), D176, G189, and N289. Fe cation is bound at residue D317.

Belongs to the KAE1 / TsaD family. The cofactor is Fe(2+).

Its subcellular location is the cytoplasm. It catalyses the reaction L-threonylcarbamoyladenylate + adenosine(37) in tRNA = N(6)-L-threonylcarbamoyladenosine(37) in tRNA + AMP + H(+). Required for the formation of a threonylcarbamoyl group on adenosine at position 37 (t(6)A37) in tRNAs that read codons beginning with adenine. Is involved in the transfer of the threonylcarbamoyl moiety of threonylcarbamoyl-AMP (TC-AMP) to the N6 group of A37, together with TsaE and TsaB. TsaD likely plays a direct catalytic role in this reaction. The sequence is that of tRNA N6-adenosine threonylcarbamoyltransferase from Polynucleobacter necessarius subsp. necessarius (strain STIR1).